We begin with the raw amino-acid sequence, 418 residues long: Ciliary microtubule-associated protein 2 (418 aa).

In terms of tissue distribution, sperm.

This is Ciliary microtubule-associated protein 2 from Homo sapiens (Human).